Reading from the N-terminus, the 144-residue chain is Snaclec coagulation factor IX/factor X-binding protein subunit B1 (144 aa).

Positions 1 to 23 are cleaved as a signal peptide; sequence MGRFIFVSFGLLVVFLSLSGTAA. 3 disulfides stabilise this stretch: Cys-25/Cys-36, Cys-53/Cys-142, and Cys-119/Cys-134. The C-type lectin domain maps to 32-143; the sequence is YEGHCYKPFN…CRMMANFVCE (112 aa).

The protein belongs to the snaclec family. As to quaternary structure, heterodimer of subunits A and B1; disulfide-linked. As to expression, expressed by the venom gland.

Its subcellular location is the secreted. Functionally, anticoagulant protein which binds to the gamma-carboxyglutamic acid-domain regions of factors IX (F9) and factor X (F10) in the presence of calcium with a 1 to 1 stoichiometry. In Trimeresurus stejnegeri (Chinese green tree viper), this protein is Snaclec coagulation factor IX/factor X-binding protein subunit B1.